The following is a 512-amino-acid chain: Maturase K (512 aa).

Belongs to the intron maturase 2 family. MatK subfamily.

The protein resides in the plastid. It is found in the chloroplast. Its function is as follows. Usually encoded in the trnK tRNA gene intron. Probably assists in splicing its own and other chloroplast group II introns. This is Maturase K from Lemna aequinoctialis (Lesser duckweed).